The following is a 266-amino-acid chain: Dihydropteroate synthase (266 aa).

Positions 12 to 260 constitute a Pterin-binding domain; it reads AAIMGILNVT…DVKANQDIVA (249 aa). Position 19 (Asn-19) interacts with Mg(2+). Residues Thr-59, Asp-93, Asn-112, Asp-176, Lys-212, and 248–250 contribute to the (7,8-dihydropterin-6-yl)methyl diphosphate site; that span reads RVH.

This sequence belongs to the DHPS family. As to quaternary structure, homodimer or homotrimer. The cofactor is Mg(2+).

It catalyses the reaction (7,8-dihydropterin-6-yl)methyl diphosphate + 4-aminobenzoate = 7,8-dihydropteroate + diphosphate. Its pathway is cofactor biosynthesis; tetrahydrofolate biosynthesis; 7,8-dihydrofolate from 2-amino-4-hydroxy-6-hydroxymethyl-7,8-dihydropteridine diphosphate and 4-aminobenzoate: step 1/2. Functionally, catalyzes the condensation of para-aminobenzoate (pABA) with 6-hydroxymethyl-7,8-dihydropterin diphosphate (DHPt-PP) to form 7,8-dihydropteroate (H2Pte), the immediate precursor of folate derivatives. The sequence is that of Dihydropteroate synthase (folP) from Streptococcus pyogenes serotype M6 (strain ATCC BAA-946 / MGAS10394).